The following is a 660-amino-acid chain: DNA mismatch repair protein MutL (660 aa).

It belongs to the DNA mismatch repair MutL/HexB family.

Its function is as follows. This protein is involved in the repair of mismatches in DNA. It is required for dam-dependent methyl-directed DNA mismatch repair. May act as a 'molecular matchmaker', a protein that promotes the formation of a stable complex between two or more DNA-binding proteins in an ATP-dependent manner without itself being part of a final effector complex. This Streptococcus equi subsp. equi (strain 4047) protein is DNA mismatch repair protein MutL.